The sequence spans 160 residues: Ribosomal RNA large subunit methyltransferase H (160 aa).

Residues Leu76, Gly108, and 127–132 (LGKMTW) contribute to the S-adenosyl-L-methionine site.

It belongs to the RNA methyltransferase RlmH family. As to quaternary structure, homodimer.

It is found in the cytoplasm. It catalyses the reaction pseudouridine(1915) in 23S rRNA + S-adenosyl-L-methionine = N(3)-methylpseudouridine(1915) in 23S rRNA + S-adenosyl-L-homocysteine + H(+). Functionally, specifically methylates the pseudouridine at position 1915 (m3Psi1915) in 23S rRNA. The polypeptide is Ribosomal RNA large subunit methyltransferase H (Sinorhizobium medicae (strain WSM419) (Ensifer medicae)).